The following is a 148-amino-acid chain: Lipoprotein signal peptidase (148 aa).

Transmembrane regions (helical) follow at residues Q57–T77 and V80–I100. Catalysis depends on residues D110 and D126. The chain crosses the membrane as a helical span at residues I124–E144.

This sequence belongs to the peptidase A8 family.

The protein localises to the cell membrane. The enzyme catalyses Release of signal peptides from bacterial membrane prolipoproteins. Hydrolyzes -Xaa-Yaa-Zaa-|-(S,diacylglyceryl)Cys-, in which Xaa is hydrophobic (preferably Leu), and Yaa (Ala or Ser) and Zaa (Gly or Ala) have small, neutral side chains.. The protein operates within protein modification; lipoprotein biosynthesis (signal peptide cleavage). In terms of biological role, this protein specifically catalyzes the removal of signal peptides from prolipoproteins. In Clostridioides difficile (strain 630) (Peptoclostridium difficile), this protein is Lipoprotein signal peptidase.